Here is a 1394-residue protein sequence, read N- to C-terminus: Cyclic nucleotide-gated channel beta-1 (1394 aa).

3 disordered regions span residues 1 to 95 (MLGW…AHSS), 112 to 253 (VPQP…QDSA), and 271 to 675 (VIRG…SQNS). Over 1–762 (MLGWVQRVLP…WKKYQFPQSI (762 aa)) the chain is Cytoplasmic. Polar residues-rich tracts occupy residues 68 to 86 (PQGT…QAQV) and 116 to 125 (AHSSRPSQNI). Basic and acidic residues-rich tracts occupy residues 300–312 (EESH…VDPH) and 336–355 (DEEK…RIQE). Acidic residues predominate over residues 356 to 387 (EKEDEEEEKEDGEEEEEEGREKEEEEGEEKEE). The span at 388–408 (EEGREKEEEEGEKKEEEGREK) shows a compositional bias: basic and acidic residues. The segment covering 409–418 (EEEEGGEKED) has biased composition (acidic residues). Residues 419 to 433 (EEGREKEEEEGRGKE) show a composition bias toward basic and acidic residues. 2 stretches are compositionally biased toward acidic residues: residues 452–464 (EGRE…EEEQ) and 481–490 (DRSEESETQD). Composition is skewed to low complexity over residues 493-508 (EVGG…GAQA) and 529-554 (EVGG…AQDQ). Residues 654–675 (DPTSPQGTDDQDRATSTASQNS) show a composition bias toward polar residues. A calmodulin-binding CaM1 region spans residues 671–681 (ASQNSAIINDR). The IQ-like signature appears at 682-692 (LQELVKLFKER). A disordered region spans residues 699–732 (KLIDPDVTSDEESPKPSPAKKAPEPAPEVKPAEA). The chain crosses the membrane as a helical span at residues 763–793 (DPLTNLMYILWLFFVVLAWNWNCWLIPVRWA). Residues 794-798 (FPYQT) are Extracellular-facing. Residues 799–825 (PDNIHLWLLMDYLCDLIYLLDITVFQM) form a helical membrane-spanning segment. At 826-837 (RLQFVRGGDIIT) the chain is on the cytoplasmic side. A helical membrane pass occupies residues 838–861 (DKKEMRNNYVKSQRFKMDMLCLLP). Residues 862–872 (LDLLYLKFGVN) lie on the Extracellular side of the membrane. A helical membrane pass occupies residues 873 to 887 (PLLRLPRCLKYMAFF). The Cytoplasmic portion of the chain corresponds to 888–900 (EFNNRLESILSKA). Residues 900–999 (AYVYRVIRTT…IGQMRDVVGA (100 aa)) are ion conduction pathway. The helical transmembrane segment at 901–922 (YVYRVIRTTAYLLYSLHLNSCL) threads the bilayer. The Extracellular segment spans residues 923–931 (YYWASAYEG). 2 helical membrane passes run 932–974 (LGST…EIVF) and 975–1002 (QGLN…AATA). Residues 959-962 (TIGG) are selectivity filter. At 1003–1394 (GQTYYRSCMD…EEARKEKEEE (392 aa)) the chain is on the cytoplasmic side. Positions 1082–1198 (RQMIFDMLKR…LLRKKARRML (117 aa)) are cyclic nucleotide-binding domain. 3',5'-cyclic GMP-binding residues include glycine 1143, glutamate 1144, serine 1146, arginine 1156, and threonine 1157. Arginine 1156 provides a ligand contact to 3',5'-cyclic AMP. The segment at 1261–1267 (QQQLLEQ) is calmodulin-binding CaM2. The interval 1265-1394 (LEQAKSSEDA…EEARKEKEEE (130 aa)) is disordered. Positions 1285 to 1326 (EQPPRPEPPAPEAPAPEPTAPEPLAPEAPAPEAPAPSSPPPA) are enriched in pro residues. Basic and acidic residues-rich tracts occupy residues 1329–1345 (ERPE…EHPV) and 1364–1376 (VPEK…KKEE).

This sequence belongs to the cyclic nucleotide-gated cation channel (TC 1.A.1.5) family. CNGB1 subfamily. The rod cyclic nucleotide-gated channel is a heterotetramer composed of CNGA1 and CNGB1 subunits with 3:1 stoichiometry. CNGA1:CNGB1 channel binds Ca(2+)-bound CALM1 via CaM1 and CaM2 regions of the CNGB1 subunit; this interaction modulates the affinity of the channel for cNMPs in response to intracellular Ca(2+) levels. The olfactory cyclic nucleotide-gated channel is a heterotetramer composed of CNGA2, CNGA4 and CNGB1 subunits with 2:1:1 stoichiometry. As to expression, retina, testis, kidney, heart and brain.

The protein resides in the membrane. The enzyme catalyses Ca(2+)(in) = Ca(2+)(out). It catalyses the reaction Na(+)(in) = Na(+)(out). It carries out the reaction K(+)(in) = K(+)(out). The catalysed reaction is NH4(+)(in) = NH4(+)(out). The enzyme catalyses Rb(+)(in) = Rb(+)(out). It catalyses the reaction Li(+)(in) = Li(+)(out). It carries out the reaction Cs(+)(in) = Cs(+)(out). Its function is as follows. Pore-forming subunit of the rod cyclic nucleotide-gated channel. Mediates rod photoresponses at dim light converting transient changes in intracellular cGMP levels into electrical signals. In the dark, cGMP levels are high and keep the channel open enabling a steady inward current carried by Na(+) and Ca(2+) ions that leads to membrane depolarization and neurotransmitter release from synaptic terminals. Upon photon absorption cGMP levels decline leading to channel closure and membrane hyperpolarization that ultimately slows neurotransmitter release and signals the presence of light, the end point of the phototransduction cascade. Pore-forming subunit of the olfactory cyclic nucleotide-gated channel. Operates in the cilia of olfactory sensory neurons where chemical stimulation of the odorant is converted to an electrical signal. Mediates odorant-induced cAMP-dependent Ca(2+) influx triggering neuron depolarization. The rise of intracellular Ca(2+) levels potentiates the olfactory response by activating Ca(2+)-dependent Cl(-) channels, but it also serves as a negative feedback signal to desensitize the channel for rapid adaptation to odorants. Conducts cGMP- and cAMP-gated ion currents, with permeability for monovalent and divalent cations. The selectivity for Ca(2+) over Na(+) increases with cGMP concentrations, whereas the selectivity among monovalent ions is independent of the cGMP levels. This is Cyclic nucleotide-gated channel beta-1 from Bos taurus (Bovine).